We begin with the raw amino-acid sequence, 242 residues long: Zinc-finger homeodomain protein 11 (242 aa).

The ZF-HD dimerization-type; degenerate zinc-finger motif lies at 31–82 (YKECLKNHAANLGGHALDGCGEFMPSPTATSTDPSSLRCAACGCHRNFHRRD). Disordered stretches follow at residues 83 to 109 (PSENLNFLTAPPISSPSGTESPPSRHV) and 135 to 161 (PGPSDQDPTVVRSENSSRGAMRKRTRT). The segment at residues 156–213 (RKRTRTKFTPEQKIKMRAFAEKAGWKINGCDEKSVREFCNEVGIERGVLKVWMHNNKY) is a DNA-binding region (homeobox; atypical).

In terms of assembly, homo- and heterodimer with other ZFHD proteins. Interacts with HIPP20, HIPP21, HIPP22, HIPP23, HIPP24, HIPP26, HIPP27, HIPP30 and MED25 (via ACID domain). Interacts with NAC019, NAC055 and NAC072 (via NAC binding domain). Binds to ZHD1, ZHD2, ZHD3, ZHD4, ZHD5, ZHD6, ZHD7, ZHD8, ZHD9, ZHD12, ZHD13 and ZHD14. Expressed in roots, inflorescences, open flowers and seeds. Detected in stems and seedlings.

The protein resides in the nucleus. In terms of biological role, transcription factor involved in the up-regulation of several stress-inducible genes. Acts as a transcriptional activator by interacting with MED25 and NAC proteins. Involved in increased drought tolerance. This is Zinc-finger homeodomain protein 11 (ZHD11) from Arabidopsis thaliana (Mouse-ear cress).